A 498-amino-acid chain; its full sequence is UDP-N-acetylmuramate--L-alanine ligase (498 aa).

Residue 133–139 participates in ATP binding; that stretch reads GSSGKTT.

This sequence belongs to the MurCDEF family.

It localises to the cytoplasm. The catalysed reaction is UDP-N-acetyl-alpha-D-muramate + L-alanine + ATP = UDP-N-acetyl-alpha-D-muramoyl-L-alanine + ADP + phosphate + H(+). The protein operates within cell wall biogenesis; peptidoglycan biosynthesis. In terms of biological role, cell wall formation. This Wolbachia pipientis wMel protein is UDP-N-acetylmuramate--L-alanine ligase.